A 147-amino-acid chain; its full sequence is uncharacterized protein (147 aa).

A helical membrane pass occupies residues 71-91 (IDILAFVAGTVGVGSLVLLQF).

The protein localises to the virion. It localises to the host membrane. This is an uncharacterized protein from Acanthamoeba polyphaga mimivirus (APMV).